Here is a 221-residue protein sequence, read N- to C-terminus: Orotate phosphoribosyltransferase (221 aa).

Residue lysine 26 participates in 5-phospho-alpha-D-ribose 1-diphosphate binding. 34–35 (FF) serves as a coordination point for orotate. 5-phospho-alpha-D-ribose 1-diphosphate is bound by residues 72–73 (YK), arginine 98, lysine 99, lysine 102, histidine 104, and 123–131 (DDVISAGTS). 2 residues coordinate orotate: serine 127 and arginine 155.

The protein belongs to the purine/pyrimidine phosphoribosyltransferase family. PyrE subfamily. In terms of assembly, homodimer. Requires Mg(2+) as cofactor.

It carries out the reaction orotidine 5'-phosphate + diphosphate = orotate + 5-phospho-alpha-D-ribose 1-diphosphate. Its pathway is pyrimidine metabolism; UMP biosynthesis via de novo pathway; UMP from orotate: step 1/2. In terms of biological role, catalyzes the transfer of a ribosyl phosphate group from 5-phosphoribose 1-diphosphate to orotate, leading to the formation of orotidine monophosphate (OMP). This is Orotate phosphoribosyltransferase from Janthinobacterium sp. (strain Marseille) (Minibacterium massiliensis).